The chain runs to 194 residues: tRNA (guanosine(18)-2'-O)-methyltransferase (194 aa).

Residues T99, 122 to 126, I142, and L151 contribute to the S-adenosyl-L-methionine site; that span reads GAEKW.

Belongs to the class IV-like SAM-binding methyltransferase superfamily. RNA methyltransferase TrmH family. As to quaternary structure, monomer.

It carries out the reaction guanosine(18) in tRNA + S-adenosyl-L-methionine = 2'-O-methylguanosine(18) in tRNA + S-adenosyl-L-homocysteine + H(+). With respect to regulation, stimulated by magnesium ions and spermine. Inhibited by S-adenosyl-homocysteine. Functionally, catalyzes the 2'-O methylation of guanosine at position 18 in tRNA. In Thermus thermophilus (strain ATCC BAA-163 / DSM 7039 / HB27), this protein is tRNA (guanosine(18)-2'-O)-methyltransferase.